Here is a 164-residue protein sequence, read N- to C-terminus: Putative HTH-type transcriptional regulator ORF2 (164 aa).

The 130-residue stretch at 2–131 (RLTTKGRYAV…SGISLADLVA (130 aa)) folds into the HTH rrf2-type domain.

In Azotobacter vinelandii, this protein is Putative HTH-type transcriptional regulator ORF2.